We begin with the raw amino-acid sequence, 205 residues long: Thymidylate kinase (205 aa).

11-18 (GVEGSGKS) contributes to the ATP binding site.

The protein belongs to the thymidylate kinase family.

The enzyme catalyses dTMP + ATP = dTDP + ADP. Phosphorylation of dTMP to form dTDP in both de novo and salvage pathways of dTTP synthesis. The chain is Thymidylate kinase from Ruthia magnifica subsp. Calyptogena magnifica.